Here is a 140-residue protein sequence, read N- to C-terminus: Ribonuclease P protein subunit p20 (140 aa).

Belongs to the histone-like Alba family. Component of nuclear RNase P and RNase MRP complexes. RNase P consists of a catalytic RNA moiety and 10 different protein chains; POP1, POP4, POP5, POP7, RPP14, RPP21, RPP25, RPP30, RPP38 and RPP40. Within the RNase P complex, POP1, POP7 and RPP25 form the 'finger' subcomplex, POP5, RPP14, RPP40 and homodimeric RPP30 form the 'palm' subcomplex, and RPP21, POP4 and RPP38 form the 'wrist' subcomplex. All subunits of the RNase P complex interact with the catalytic RNA. Several subunits of RNase P are also part of the RNase MRP complex. RNase MRP consists of a catalytic RNA moiety and about 8 protein subunits; POP1, POP7, RPP25, RPP30, RPP38, RPP40 and possibly also POP4 and POP5. Interacts with SMN1. POP7 forms a heterodimer with RPP25 that binds to the P3 stem loop of the catalytic RNA.

It is found in the nucleus. Its subcellular location is the nucleolus. It localises to the cytoplasm. The protein resides in the cytoplasmic granule. In terms of biological role, component of ribonuclease P, a ribonucleoprotein complex that generates mature tRNA molecules by cleaving their 5'-ends. Also a component of the MRP ribonuclease complex, which cleaves pre-rRNA sequences. The sequence is that of Ribonuclease P protein subunit p20 (POP7) from Bos taurus (Bovine).